An 87-amino-acid chain; its full sequence is Exodeoxyribonuclease 7 small subunit (87 aa).

It belongs to the XseB family. Heterooligomer composed of large and small subunits.

It is found in the cytoplasm. The enzyme catalyses Exonucleolytic cleavage in either 5'- to 3'- or 3'- to 5'-direction to yield nucleoside 5'-phosphates.. In terms of biological role, bidirectionally degrades single-stranded DNA into large acid-insoluble oligonucleotides, which are then degraded further into small acid-soluble oligonucleotides. This chain is Exodeoxyribonuclease 7 small subunit, found in Halorhodospira halophila (strain DSM 244 / SL1) (Ectothiorhodospira halophila (strain DSM 244 / SL1)).